Consider the following 791-residue polypeptide: ABC multidrug transporter mdr2 (791 aa).

An N-linked (GlcNAc...) asparagine glycan is attached at asparagine 147. 2 helical membrane passes run 182 to 202 (ALAF…PFSI) and 220 to 240 (LFGL…TLGA). The ABC transmembrane type-1 domain occupies 182-471 (ALAFLFLLVS…LSSFYSELMK (290 aa)). Asparagine 303 carries an N-linked (GlcNAc...) asparagine glycan. 2 consecutive transmembrane segments (helical) span residues 307–324 (GLRA…MAYV) and 326–346 (LKLS…AFFY). Asparagine 352 and asparagine 421 each carry an N-linked (GlcNAc...) asparagine glycan. 2 helical membrane passes run 422–442 (MTIL…AITI) and 445–465 (LTSF…LSSF). The ABC transporter domain maps to 504–741 (IRFENVTFSY…PDGAFTKLME (238 aa)). Residue asparagine 508 is glycosylated (N-linked (GlcNAc...) asparagine). 539–546 (GPSGGGKS) lines the ATP pocket. Asparagine 692 carries N-linked (GlcNAc...) asparagine glycosylation. Over residues 754–769 (ANTPANPVAQETSWDL) the composition is skewed to polar residues. The disordered stretch occupies residues 754 to 791 (ANTPANPVAQETSWDLQSDDGTEISEDTNIPSEPRTID). Residues 770-779 (QSDDGTEISE) show a composition bias toward acidic residues.

Belongs to the ABC transporter superfamily. ABCB family. Mitochondrial peptide exporter (TC 3.A.1.212) subfamily.

Its subcellular location is the cell membrane. Its function is as follows. Pleiotropic ABC efflux transporter that may be involved in A.fumigatus adaptation to azoles. The chain is ABC multidrug transporter mdr2 from Aspergillus fumigatus (strain ATCC MYA-4609 / CBS 101355 / FGSC A1100 / Af293) (Neosartorya fumigata).